The chain runs to 290 residues: Ribosomal RNA small subunit methyltransferase A (290 aa).

6 residues coordinate S-adenosyl-L-methionine: Asn-27, Leu-29, Gly-54, Glu-75, Asp-100, and Asn-125.

Belongs to the class I-like SAM-binding methyltransferase superfamily. rRNA adenine N(6)-methyltransferase family. RsmA subfamily.

Its subcellular location is the cytoplasm. The enzyme catalyses adenosine(1518)/adenosine(1519) in 16S rRNA + 4 S-adenosyl-L-methionine = N(6)-dimethyladenosine(1518)/N(6)-dimethyladenosine(1519) in 16S rRNA + 4 S-adenosyl-L-homocysteine + 4 H(+). Specifically dimethylates two adjacent adenosines (A1518 and A1519) in the loop of a conserved hairpin near the 3'-end of 16S rRNA in the 30S particle. May play a critical role in biogenesis of 30S subunits. The chain is Ribosomal RNA small subunit methyltransferase A from Streptococcus pneumoniae (strain P1031).